Here is a 343-residue protein sequence, read N- to C-terminus: Replication initiation protein (343 aa).

Residues 42–61 form a disordered region; sequence ERKRTKRRRGEHSTKPKCEN.

Probably functions as an initiator for the IncI1 ColIb-P9 replicon. The sequence is that of Replication initiation protein (repZ) from Escherichia coli.